Consider the following 660-residue polypeptide: DNA mismatch repair protein MutL (660 aa).

It belongs to the DNA mismatch repair MutL/HexB family.

In terms of biological role, this protein is involved in the repair of mismatches in DNA. It is required for dam-dependent methyl-directed DNA mismatch repair. May act as a 'molecular matchmaker', a protein that promotes the formation of a stable complex between two or more DNA-binding proteins in an ATP-dependent manner without itself being part of a final effector complex. This Streptococcus equi subsp. equi (strain 4047) protein is DNA mismatch repair protein MutL.